Reading from the N-terminus, the 279-residue chain is Putative pyruvate, phosphate dikinase regulatory protein (279 aa).

Residue 154 to 161 (GVSRTSKT) coordinates ADP.

It belongs to the pyruvate, phosphate/water dikinase regulatory protein family. PDRP subfamily.

The catalysed reaction is N(tele)-phospho-L-histidyl/L-threonyl-[pyruvate, phosphate dikinase] + ADP = N(tele)-phospho-L-histidyl/O-phospho-L-threonyl-[pyruvate, phosphate dikinase] + AMP + H(+). It catalyses the reaction N(tele)-phospho-L-histidyl/O-phospho-L-threonyl-[pyruvate, phosphate dikinase] + phosphate + H(+) = N(tele)-phospho-L-histidyl/L-threonyl-[pyruvate, phosphate dikinase] + diphosphate. Bifunctional serine/threonine kinase and phosphorylase involved in the regulation of the pyruvate, phosphate dikinase (PPDK) by catalyzing its phosphorylation/dephosphorylation. This Rhodopseudomonas palustris (strain BisB18) protein is Putative pyruvate, phosphate dikinase regulatory protein.